A 126-amino-acid chain; its full sequence is Glycerol dehydrogenase small subunit (126 aa).

The next 4 membrane-spanning stretches (helical) occupy residues 13–33 (WLTLVLGVVIILVGLFFVIAG), 41–61 (GSVYYVICGIPLVAGGVFMLM), 67–87 (AFLYLGALAYTWVWSLWEVGF), and 92–112 (LLPRDFGPTLLGILVALTIPV).

The protein localises to the cell membrane. It catalyses the reaction glycerol + A = dihydroxyacetone + AH2. Functionally, catalyzes the oxidation of glycerol to glycerone. Also acts, more slowly, on a number of other polyols including D-sorbitol, D-arabinitol, D-mannitol, meso-erythritol, adonitol and propylene glycol. The protein is Glycerol dehydrogenase small subunit (sldB) of Gluconobacter oxydans (strain 621H) (Gluconobacter suboxydans).